The following is a 432-amino-acid chain: Homogentisate 1,2-dioxygenase (432 aa).

Histidine 287 (proton acceptor) is an active-site residue. Fe cation contacts are provided by histidine 330 and glutamate 336. Homogentisate contacts are provided by tyrosine 345 and histidine 366. Histidine 366 is a binding site for Fe cation.

It belongs to the homogentisate dioxygenase family. As to quaternary structure, hexamer; dimer of trimers. Requires Fe cation as cofactor.

It carries out the reaction homogentisate + O2 = 4-maleylacetoacetate + H(+). Its pathway is amino-acid degradation; L-phenylalanine degradation; acetoacetate and fumarate from L-phenylalanine: step 4/6. Its function is as follows. Involved in the catabolism of homogentisate (2,5-dihydroxyphenylacetate or 2,5-OH-PhAc), a central intermediate in the degradation of phenylalanine and tyrosine. Catalyzes the oxidative ring cleavage of the aromatic ring of homogentisate to yield maleylacetoacetate. The protein is Homogentisate 1,2-dioxygenase of Pseudomonas aeruginosa (strain UCBPP-PA14).